The sequence spans 347 residues: BSD domain-containing protein C22A12.14c (347 aa).

Thr123 and Thr125 each carry phosphothreonine. A BSD domain is found at 167–219 (WEKEISIDGKTEEISLLLEEYPDLRKQMESLVPSEVSYDDFWKRFFWHKEVVQ). The interval 229–347 (DEEEIFSWGD…DDDEDDDDWE (119 aa)) is disordered. Phosphoserine occurs at positions 235, 241, and 246. Acidic residues predominate over residues 240-251 (RSDEEESDNEQV). Residues 297 to 312 (HDGEVDGEVKEEEENK) show a composition bias toward basic and acidic residues. Over residues 313–325 (VSSSSNIEASQSS) the composition is skewed to low complexity. The segment covering 327–337 (EVKDEANRKVD) has biased composition (basic and acidic residues). Over residues 338–347 (DDDEDDDDWE) the composition is skewed to acidic residues.

Its subcellular location is the cytoplasm. In Schizosaccharomyces pombe (strain 972 / ATCC 24843) (Fission yeast), this protein is BSD domain-containing protein C22A12.14c.